The primary structure comprises 139 residues: Putative pre-16S rRNA nuclease (139 aa).

It belongs to the YqgF nuclease family.

It localises to the cytoplasm. Could be a nuclease involved in processing of the 5'-end of pre-16S rRNA. The chain is Putative pre-16S rRNA nuclease from Haemophilus influenzae (strain PittEE).